The primary structure comprises 85 residues: U4-theraphotoxin-Hhn1a (85 aa).

An N-terminal signal peptide occupies residues 1–22; sequence MKVTLIAILTCAAVLVLHTTAA. The propeptide occupies 23-48; it reads EELEAESQLMEVGMPDTELAAVDEER. 3 cysteine pairs are disulfide-bonded: C52/C66, C56/C77, and C71/C82.

The protein belongs to the neurotoxin 12 (Hwtx-2) family. 02 (Hwtx-2) subfamily. Monomer. Expressed by the venom gland.

The protein resides in the secreted. In terms of biological role, neurotoxin active on both insects and mammals. The sequence is that of U4-theraphotoxin-Hhn1a from Cyriopagopus hainanus (Chinese bird spider).